A 196-amino-acid polypeptide reads, in one-letter code: UMP-CMP kinase (196 aa).

ATP is bound at residue 13-18 (GAGKGT). Phosphoserine is present on Ser33. Residues 33-63 (SAGELLRDERKNPDSQYGELIEKYIKDGKIV) form an NMP region. Arg39 serves as a coordination point for a ribonucleoside 5'-phosphate. 2 positions are modified to N6-acetyllysine: Lys43 and Lys55. A ribonucleoside 5'-phosphate is bound by residues 61 to 63 (KIV) and 93 to 96 (GFPR). Asn100 serves as a coordination point for CMP. Position 106 is an N6-succinyllysine (Lys106). Residues 133-143 (ERGKSSGRSDD) are LID. Arg134 serves as a coordination point for ATP. Arg140 and Arg151 together coordinate a ribonucleoside 5'-phosphate. Lys179 is an ATP binding site. The residue at position 180 (Ser180) is a Phosphoserine.

This sequence belongs to the adenylate kinase family. UMP-CMP kinase subfamily. Monomer. The cofactor is Mg(2+).

Its subcellular location is the nucleus. The protein localises to the cytoplasm. It carries out the reaction CMP + ATP = CDP + ADP. The enzyme catalyses dCMP + ATP = dCDP + ADP. The catalysed reaction is UMP + ATP = UDP + ADP. It catalyses the reaction a 2'-deoxyribonucleoside 5'-diphosphate + ATP = a 2'-deoxyribonucleoside 5'-triphosphate + ADP. It carries out the reaction a ribonucleoside 5'-diphosphate + ATP = a ribonucleoside 5'-triphosphate + ADP. In terms of biological role, catalyzes the phosphorylation of pyrimidine nucleoside monophosphates at the expense of ATP. Plays an important role in de novo pyrimidine nucleotide biosynthesis. Has preference for UMP and CMP as phosphate acceptors. Also displays broad nucleoside diphosphate kinase activity. The chain is UMP-CMP kinase from Sus scrofa (Pig).